A 617-amino-acid polypeptide reads, in one-letter code: Dihydroxy-acid dehydratase (617 aa).

D81 is a Mg(2+) binding site. Position 122 (C122) interacts with [2Fe-2S] cluster. 2 residues coordinate Mg(2+): D123 and K124. K124 carries the N6-carboxylysine modification. Position 195 (C195) interacts with [2Fe-2S] cluster. E491 contacts Mg(2+). S517 acts as the Proton acceptor in catalysis.

The protein belongs to the IlvD/Edd family. Homodimer. It depends on [2Fe-2S] cluster as a cofactor. Mg(2+) is required as a cofactor.

The enzyme catalyses (2R)-2,3-dihydroxy-3-methylbutanoate = 3-methyl-2-oxobutanoate + H2O. The catalysed reaction is (2R,3R)-2,3-dihydroxy-3-methylpentanoate = (S)-3-methyl-2-oxopentanoate + H2O. It functions in the pathway amino-acid biosynthesis; L-isoleucine biosynthesis; L-isoleucine from 2-oxobutanoate: step 3/4. Its pathway is amino-acid biosynthesis; L-valine biosynthesis; L-valine from pyruvate: step 3/4. In terms of biological role, functions in the biosynthesis of branched-chain amino acids. Catalyzes the dehydration of (2R,3R)-2,3-dihydroxy-3-methylpentanoate (2,3-dihydroxy-3-methylvalerate) into 2-oxo-3-methylpentanoate (2-oxo-3-methylvalerate) and of (2R)-2,3-dihydroxy-3-methylbutanoate (2,3-dihydroxyisovalerate) into 2-oxo-3-methylbutanoate (2-oxoisovalerate), the penultimate precursor to L-isoleucine and L-valine, respectively. The protein is Dihydroxy-acid dehydratase of Buchnera aphidicola subsp. Schizaphis graminum (strain Sg).